A 428-amino-acid polypeptide reads, in one-letter code: tRNA modification GTPase MnmE (428 aa).

(6S)-5-formyl-5,6,7,8-tetrahydrofolate is bound by residues Arg20, Glu77, and Lys117. One can recognise a TrmE-type G domain in the interval 213-351 (GFEIALVGAP…LLEKIRSVFS (139 aa)). Asn223 lines the K(+) pocket. Residues 223–228 (NAGKST), 242–248 (SEIAGTT), and 267–270 (DTAG) contribute to the GTP site. Residue Ser227 coordinates Mg(2+). K(+)-binding residues include Ser242, Ile244, and Thr247. Residue Thr248 coordinates Mg(2+). Lys428 is a binding site for (6S)-5-formyl-5,6,7,8-tetrahydrofolate.

This sequence belongs to the TRAFAC class TrmE-Era-EngA-EngB-Septin-like GTPase superfamily. TrmE GTPase family. As to quaternary structure, homodimer. Heterotetramer of two MnmE and two MnmG subunits. Requires K(+) as cofactor.

It localises to the cytoplasm. Exhibits a very high intrinsic GTPase hydrolysis rate. Involved in the addition of a carboxymethylaminomethyl (cmnm) group at the wobble position (U34) of certain tRNAs, forming tRNA-cmnm(5)s(2)U34. The polypeptide is tRNA modification GTPase MnmE (Roseobacter denitrificans (strain ATCC 33942 / OCh 114) (Erythrobacter sp. (strain OCh 114))).